A 303-amino-acid polypeptide reads, in one-letter code: UDP-3-O-acyl-N-acetylglucosamine deacetylase (303 aa).

The Zn(2+) site is built by His78, His237, and Asp241. Residue His264 is the Proton donor of the active site.

This sequence belongs to the LpxC family. Zn(2+) is required as a cofactor.

It catalyses the reaction a UDP-3-O-[(3R)-3-hydroxyacyl]-N-acetyl-alpha-D-glucosamine + H2O = a UDP-3-O-[(3R)-3-hydroxyacyl]-alpha-D-glucosamine + acetate. The protein operates within glycolipid biosynthesis; lipid IV(A) biosynthesis; lipid IV(A) from (3R)-3-hydroxytetradecanoyl-[acyl-carrier-protein] and UDP-N-acetyl-alpha-D-glucosamine: step 2/6. In terms of biological role, catalyzes the hydrolysis of UDP-3-O-myristoyl-N-acetylglucosamine to form UDP-3-O-myristoylglucosamine and acetate, the committed step in lipid A biosynthesis. This chain is UDP-3-O-acyl-N-acetylglucosamine deacetylase, found in Azotobacter vinelandii (strain DJ / ATCC BAA-1303).